The primary structure comprises 591 residues: Aspartate--tRNA ligase (591 aa).

Glu176 serves as a coordination point for L-aspartate. Positions 200–203 (QILK) are aspartate. Arg222 contributes to the L-aspartate binding site. Residues 222–224 (RDE) and Gln231 each bind ATP. His450 provides a ligand contact to L-aspartate. Glu484 serves as a coordination point for ATP. Arg491 is an L-aspartate binding site. 536–539 (GLDR) contacts ATP.

It belongs to the class-II aminoacyl-tRNA synthetase family. Type 1 subfamily. In terms of assembly, homodimer.

The protein localises to the cytoplasm. It catalyses the reaction tRNA(Asp) + L-aspartate + ATP = L-aspartyl-tRNA(Asp) + AMP + diphosphate. Catalyzes the attachment of L-aspartate to tRNA(Asp) in a two-step reaction: L-aspartate is first activated by ATP to form Asp-AMP and then transferred to the acceptor end of tRNA(Asp). This chain is Aspartate--tRNA ligase, found in Listeria welshimeri serovar 6b (strain ATCC 35897 / DSM 20650 / CCUG 15529 / CIP 8149 / NCTC 11857 / SLCC 5334 / V8).